The primary structure comprises 572 residues: Transcription factor E3 (572 aa).

Residue serine 47 is modified to Phosphoserine; by MTOR. Low complexity predominate over residues 87–125 (TTPATLSASSSAGGSRTPAMSSSSSRVLLRQQLMRAQAQ). Residues 87-152 (TTPATLSASS…SPAPASPAIS (66 aa)) form a disordered region. Positions 126 to 135 (EQERRERREQ) are enriched in basic and acidic residues. Position 187 is an asymmetric dimethylarginine (arginine 187). Residues 210 to 248 (LASQALTPPPGPSSAQPLPAPETAHATGPTGSAPNSPMA) are disordered. The segment at 259–270 (EIDDVIDEIISL) is strong transcription activation domain. At serine 320 the chain carries Phosphoserine; by MTOR. Lysine 338 participates in a covalent cross-link: Glycyl lysine isopeptide (Lys-Gly) (interchain with G-Cter in SUMO2). The 54-residue stretch at 345-398 (QKKDNHNLIERRRRFNINDRIKELGTLIPKSNDPEMRWNKGTILKASVDYIRKL) folds into the bHLH domain. Residues 355 to 358 (RRRR) carry the Nuclear localization signal motif. The tract at residues 408 to 429 (LESRQRSLEQANRSLQLRIQEL) is leucine-zipper. 2 disordered regions span residues 439–495 (PVPP…APPS) and 530–572 (VGGL…EEES). The segment covering 446–457 (LLSLTTSSVSDS) has biased composition (low complexity). Phosphoserine occurs at positions 539, 545, 551, 553, 557, and 565. Over residues 543–572 (AASDPLLSSVSPAVSKASSRRSSFSMEEES) the composition is skewed to low complexity.

It belongs to the MiT/TFE family. As to quaternary structure, homodimer and heterodimer; with TFEB or MITF. Interacts with RRAGC/RagC GDP-bound and RRAGD/RagD GDP-bound; promoting its recruitment to lysosomal membrane in the presence of nutrients. Interacts with TSC22D1; the interaction is enhanced in the presence of TGF-beta. Sumoylated; does not affect dimerization with MITF. In terms of processing, phosphorylation ar Ser-47 and Ser-320 by MTOR via non-canonical mTORC1 pathway regulates its stability and subcellular location, respectively. When nutrients are present, phosphorylation by MTOR at Ser-47 promotes ubiquitination by the SCF(BTRC) complex, followed by degradation. When nutrients are present, phosphorylation by MTOR at Ser-320 also promotes association with 14-3-3/YWHA adapters and retention in the cytosol. Phosphorylation at Ser-47 plays a more critical role than phosphorylation at Ser-320 for TFE3 inactivation. Inhibition of mTORC1, starvation and lysosomal disruption, promotes dephosphorylation and transcription factor activity. Post-translationally, ubiquitinated by the SCF(BTRC) and SCF(FBXW11) complexes following phosphorylation at Ser-47 by MTOR, leading to its degradation by the proteasome. In terms of tissue distribution, widely expressed.

It localises to the cytoplasm. The protein resides in the cytosol. The protein localises to the nucleus. Its subcellular location is the lysosome membrane. Functionally, transcription factor that acts as a master regulator of lysosomal biogenesis and immune response. Specifically recognizes and binds E-box sequences (5'-CANNTG-3'); efficient DNA-binding requires dimerization with itself or with another MiT/TFE family member such as TFEB or MITF. Involved in the cellular response to amino acid availability by acting downstream of MTOR: in the presence of nutrients, TFE3 phosphorylation by MTOR promotes its inactivation. Upon starvation or lysosomal stress, inhibition of MTOR induces TFE3 dephosphorylation, resulting in transcription factor activity. Specifically recognizes and binds the CLEAR-box sequence (5'-GTCACGTGAC-3') present in the regulatory region of many lysosomal genes, leading to activate their expression, thereby playing a central role in expression of lysosomal genes. Maintains the pluripotent state of embryonic stem cells by promoting the expression of genes such as ESRRB; mTOR-dependent TFE3 cytosolic retention and inactivation promotes exit from pluripotency. Required to maintain the naive pluripotent state of hematopoietic stem cell; mTOR-dependent cytoplasmic retention of TFE3 promotes the exit of hematopoietic stem cell from pluripotency. TFE3 activity is also involved in the inhibition of neuronal progenitor differentiation. Acts as a positive regulator of browning of adipose tissue by promoting expression of target genes; mTOR-dependent phosphorylation promotes cytoplasmic retention of TFE3 and inhibits browning of adipose tissue. In association with TFEB, activates the expression of CD40L in T-cells, thereby playing a role in T-cell-dependent antibody responses in activated CD4(+) T-cells and thymus-dependent humoral immunity. Specifically recognizes the MUE3 box, a subset of E-boxes, present in the immunoglobulin enhancer. It also binds very well to a USF/MLTF site. Promotes TGF-beta-induced transcription of COL1A2; via its interaction with TSC22D1 at E-boxes in the gene proximal promoter. May regulate lysosomal positioning in response to nutrient deprivation by promoting the expression of PIP4P1. This chain is Transcription factor E3, found in Mus musculus (Mouse).